The chain runs to 111 residues: Heavy metal-associated isoprenylated plant protein 10 (111 aa).

Positions 1 to 68 (MQETVVFEWG…ICDYVDITAV (68 aa)) constitute an HMA domain. The segment at 68–111 (VGPEGQPAQNRNPVKKPEPKVIRGRPYPPQKKTPGKNSDECIIL) is disordered. Residue C108 is modified to Cysteine methyl ester. C108 carries the S-farnesyl cysteine lipid modification. A propeptide spans 109 to 111 (IIL) (removed in mature form).

The protein belongs to the HIPP family.

Functionally, probable heavy-metal-binding protein. The sequence is that of Heavy metal-associated isoprenylated plant protein 10 from Arabidopsis thaliana (Mouse-ear cress).